Consider the following 540-residue polypeptide: Chaperonin GroEL (540 aa).

Residues 30–33 (TLGP), Lys-51, 87–91 (DGTTT), Gly-415, and Asp-495 each bind ATP.

This sequence belongs to the chaperonin (HSP60) family. Forms a cylinder of 14 subunits composed of two heptameric rings stacked back-to-back. Interacts with the co-chaperonin GroES.

The protein resides in the cytoplasm. It catalyses the reaction ATP + H2O + a folded polypeptide = ADP + phosphate + an unfolded polypeptide.. Functionally, together with its co-chaperonin GroES, plays an essential role in assisting protein folding. The GroEL-GroES system forms a nano-cage that allows encapsulation of the non-native substrate proteins and provides a physical environment optimized to promote and accelerate protein folding. The chain is Chaperonin GroEL from Serratia ficaria.